The primary structure comprises 252 residues: F-box/SPRY domain-containing protein 1 (252 aa).

Residues 1–48 (MVDPLCNYNVLEAIFSYLELNDLYRCSQVCKSWYHFLNDENSDVWRWH) enclose the F-box domain. Residues 58 to 250 (VKSDLLASVS…VSMVYLGTPL (193 aa)) form the B30.2/SPRY domain.

This sequence belongs to the FBXO45/Fsn family. Component of an E3 ubiquitin ligase complex composed of hiw and Fsn.

It is found in the synapse. The protein operates within protein modification; protein ubiquitination. Functionally, required in the presynaptic motoneuron to down-regulate the levels of wnd and restrain synaptic terminal growth at the neuromuscular junction (NMJ). This Drosophila virilis (Fruit fly) protein is F-box/SPRY domain-containing protein 1.